Reading from the N-terminus, the 221-residue chain is Ribonuclease S-2 (221 aa).

The first 20 residues, 1-20 (MIYIFTMVFSLNVLILSSSA), serve as a signal peptide directing secretion. Position 31 (Gln-31) interacts with RNA. Cysteines 37 and 44 form a disulfide. RNA-binding positions include His-55, 91 to 92 (NV), Phe-101, 104 to 105 (KQ), and 108 to 109 (KH). The active-site Proton donor is His-55. Cys-70 and Cys-112 are disulfide-bonded. Asn-91 is a glycosylation site (N-linked (GlcNAc...) asparagine). Gln-105 is a catalytic residue. The Proton acceptor role is filled by His-109. N-linked (GlcNAc...) asparagine glycosylation is found at Asn-137, Asn-153, and Asn-195. Cystine bridges form between Cys-176-Cys-214 and Cys-191-Cys-202.

This sequence belongs to the RNase T2 family. N-linked core structure at Asn-91, Asn-137, and Asn-153 contains xylose and at Asn-195 contains xylose and fucose.

The protein localises to the secreted. It localises to the extracellular space. It catalyses the reaction a ribonucleotidyl-ribonucleotide-RNA + H2O = a 3'-end 3'-phospho-ribonucleotide-RNA + a 5'-end dephospho-ribonucleoside-RNA + H(+). Functionally, self-incompatibility (SI) is the inherited ability of a flowering plant to prevent self-fertilization by discriminating between self and non-self pollen during pollination. In many species, self-incompatibility is controlled by the single, multiallelic locus S. In Pyrus pyrifolia (Chinese pear), this protein is Ribonuclease S-2.